Consider the following 185-residue polypeptide: Transcription factor FapR (185 aa).

This sequence belongs to the FapR family.

Functionally, transcriptional factor involved in regulation of membrane lipid biosynthesis by repressing genes involved in fatty acid and phospholipid metabolism. This Staphylococcus aureus (strain Mu3 / ATCC 700698) protein is Transcription factor FapR.